We begin with the raw amino-acid sequence, 226 residues long: Acyl-protein thioesterase 1 homolog 1 (226 aa).

Active-site charge relay system residues include serine 121, aspartate 174, and histidine 206.

It belongs to the AB hydrolase superfamily. AB hydrolase 2 family.

It is found in the cytoplasm. Its subcellular location is the nucleus. The catalysed reaction is S-hexadecanoyl-L-cysteinyl-[protein] + H2O = L-cysteinyl-[protein] + hexadecanoate + H(+). Its function is as follows. Hydrolyzes fatty acids from S-acylated cysteine residues in proteins with a strong preference for palmitoylated G-alpha proteins over other acyl substrates. Mediates the deacylation of G-alpha proteins such as GPA1 in vivo, but has weak or no activity toward palmitoylated Ras proteins. Has weak lysophospholipase activity in vitro; however such activity may not exist in vivo. The chain is Acyl-protein thioesterase 1 homolog 1 from Dictyostelium discoideum (Social amoeba).